The following is a 211-amino-acid chain: Claudin-7 (211 aa).

Over 1–7 (MANSGLQ) the chain is Cytoplasmic. A helical membrane pass occupies residues 8 to 28 (LLGFSMAMLGWVGLIASTAIP). At 29-81 (QWQMSSYAGDNIITAQAMYKGLWMECVTQSTGMMSCKMYDSVLALPGALQATR) the chain is on the extracellular side. The chain crosses the membrane as a helical span at residues 82-102 (ALMVVSLVLGFLAMFVATMGM). At 103–119 (KCTRCGGDDKAKKARIA) the chain is on the cytoplasmic side. Residues 120–140 (MTGGIVFIVAGLAALVACSWI) form a helical membrane-spanning segment. Topologically, residues 141–160 (GHQIVTDFYNPLTPMNVKYE) are extracellular. A helical transmembrane segment spans residues 161-181 (FGPAIFIGWAGSALVLLGGAL). Residues 182–211 (LSCSCPGSESKAAYRAPRSYPKSNSSKEYV) lie on the Cytoplasmic side of the membrane. Residues 210-211 (YV) are interactions with TJP1, TJP2 and TJP3.

This sequence belongs to the claudin family. Directly interacts with TJP1/ZO-1, TJP2/ZO-2 and TJP3/ZO-3. The phosphorylated form interacts with EPCAM. Post-translationally, phosphorylated. In terms of tissue distribution, expressed predominantly in lung and kidney.

Its subcellular location is the cell membrane. The protein resides in the basolateral cell membrane. It localises to the cell junction. It is found in the tight junction. In terms of biological role, plays a major role in tight junction-specific obliteration of the intercellular space, through calcium-independent cell-adhesion activity. The sequence is that of Claudin-7 (Cldn7) from Mus musculus (Mouse).